Consider the following 202-residue polypeptide: Glycerol-3-phosphate acyltransferase (202 aa).

6 helical membrane-spanning segments follow: residues 3–23, 61–81, 87–107, 118–138, 144–164, and 167–187; these read NLII…LILA, IATI…LKFL, LLWS…YLLF, GAMI…WVVI, ISSL…FIFN, and LEIH…YKHL.

Belongs to the PlsY family. As to quaternary structure, probably interacts with PlsX.

The protein resides in the cell inner membrane. The enzyme catalyses an acyl phosphate + sn-glycerol 3-phosphate = a 1-acyl-sn-glycero-3-phosphate + phosphate. The protein operates within lipid metabolism; phospholipid metabolism. In terms of biological role, catalyzes the transfer of an acyl group from acyl-phosphate (acyl-PO(4)) to glycerol-3-phosphate (G3P) to form lysophosphatidic acid (LPA). This enzyme utilizes acyl-phosphate as fatty acyl donor, but not acyl-CoA or acyl-ACP. The chain is Glycerol-3-phosphate acyltransferase from Campylobacter jejuni subsp. jejuni serotype O:23/36 (strain 81-176).